We begin with the raw amino-acid sequence, 151 residues long: Prolamin PPROL 14P (151 aa).

The N-terminal stretch at 1–19 (MKIIFVFALLAIAACSATA) is a signal peptide. A Pyrrolidone carboxylic acid modification is found at Gln-20.

The protein belongs to the prolamin family.

The protein resides in the vacuole. It localises to the aleurone grain. In terms of biological role, seed storage protein; serves as a source of nitrogen, carbon and sulfur for the young developing seedling. In Oryza sativa subsp. japonica (Rice), this protein is Prolamin PPROL 14P (PROLM20).